We begin with the raw amino-acid sequence, 790 residues long: Protein SEY1 (790 aa).

Topologically, residues 1 to 692 (MELSEGELSH…KRSIVQHITQ (692 aa)) are cytoplasmic. Residues 55-284 (GNNYHIISVF…VSNELFKPEY (230 aa)) enclose the GB1/RHD3-type G domain. 65–72 (GSQSTGKS) is a GTP binding site. A helical membrane pass occupies residues 693–713 (IPYYIYLIILVLGWNEFMAII). Topologically, residues 714–716 (RNP) are lumenal. A helical membrane pass occupies residues 717-737 (LFFSLSIVLGATVYVLYYLGL). Residues 738 to 790 (LRPALVVAQRTMDEVIVMAKTKLREVLIDDHEVTGRQLNKMAGSKENIELDDM) are Cytoplasmic-facing.

The protein belongs to the TRAFAC class dynamin-like GTPase superfamily. GB1/RHD3 GTPase family. RHD3 subfamily.

The protein resides in the endoplasmic reticulum membrane. Functionally, cooperates with the reticulon proteins and tubule-shaping DP1 family proteins to generate and maintain the structure of the tubular endoplasmic reticulum network. Has GTPase activity, which is required for its function in ER organization. Required for virulence and resistance to cycloheximide. This Candida albicans (strain SC5314 / ATCC MYA-2876) (Yeast) protein is Protein SEY1.